The chain runs to 95 residues: Protein TusB (95 aa).

The protein belongs to the DsrH/TusB family. Heterohexamer, formed by a dimer of trimers. The hexameric TusBCD complex contains 2 copies each of TusB, TusC and TusD. The TusBCD complex interacts with TusE.

The protein localises to the cytoplasm. Its function is as follows. Part of a sulfur-relay system required for 2-thiolation of 5-methylaminomethyl-2-thiouridine (mnm(5)s(2)U) at tRNA wobble positions. This is Protein TusB from Yersinia pseudotuberculosis serotype O:1b (strain IP 31758).